Here is a 456-residue protein sequence, read N- to C-terminus: Serine--tRNA ligase (456 aa).

Residues 49 to 69 are disordered; it reads HERNEVSSTIGELKQAGEEEA. 241–243 is a binding site for L-serine; the sequence is TAE. ATP contacts are provided by residues 272 to 274 and Val288; that span reads RQE. L-serine is bound at residue Glu295. 368 to 371 is a binding site for ATP; that stretch reads EVSS. Ser404 contributes to the L-serine binding site.

The protein belongs to the class-II aminoacyl-tRNA synthetase family. Type-1 seryl-tRNA synthetase subfamily. Homodimer. The tRNA molecule binds across the dimer.

It localises to the cytoplasm. The catalysed reaction is tRNA(Ser) + L-serine + ATP = L-seryl-tRNA(Ser) + AMP + diphosphate + H(+). It catalyses the reaction tRNA(Sec) + L-serine + ATP = L-seryl-tRNA(Sec) + AMP + diphosphate + H(+). It functions in the pathway aminoacyl-tRNA biosynthesis; selenocysteinyl-tRNA(Sec) biosynthesis; L-seryl-tRNA(Sec) from L-serine and tRNA(Sec): step 1/1. Functionally, catalyzes the attachment of serine to tRNA(Ser). Is also able to aminoacylate tRNA(Sec) with serine, to form the misacylated tRNA L-seryl-tRNA(Sec), which will be further converted into selenocysteinyl-tRNA(Sec). This chain is Serine--tRNA ligase, found in Halorubrum lacusprofundi (strain ATCC 49239 / DSM 5036 / JCM 8891 / ACAM 34).